A 445-amino-acid polypeptide reads, in one-letter code: Phosphoglucosamine mutase (445 aa).

The active-site Phosphoserine intermediate is the serine 102. Mg(2+) is bound by residues serine 102, aspartate 241, aspartate 243, and aspartate 245. A Phosphoserine modification is found at serine 102.

Belongs to the phosphohexose mutase family. Mg(2+) is required as a cofactor. In terms of processing, activated by phosphorylation.

The catalysed reaction is alpha-D-glucosamine 1-phosphate = D-glucosamine 6-phosphate. Functionally, catalyzes the conversion of glucosamine-6-phosphate to glucosamine-1-phosphate. This is Phosphoglucosamine mutase from Hahella chejuensis (strain KCTC 2396).